The sequence spans 480 residues: uncharacterized protein (480 aa).

The region spanning 131–207 is the PUA domain; the sequence is KKIIKIKNDV…KVVKVRFFIK (77 aa).

The protein in the C-terminal section; belongs to the PAPS reductase family.

This is an uncharacterized protein from Methanocaldococcus jannaschii (strain ATCC 43067 / DSM 2661 / JAL-1 / JCM 10045 / NBRC 100440) (Methanococcus jannaschii).